We begin with the raw amino-acid sequence, 149 residues long: MNLTTLYPFLEERKLRKRVGRGSASGLGCTSGKGNKGQNARSGGGVRPGFEGGQMPLQRRLPKHGFKNAFFKVEYAIFNLDWLTTFFKGKNEILLEDIYSHKLCSVGTPVKILGSGSISNIVTIEAHKFSRSALKKLHEVGGQAKIIEK.

The tract at residues 21–54 is disordered; the sequence is RGSASGLGCTSGKGNKGQNARSGGGVRPGFEGGQ. Composition is skewed to gly residues over residues 23 to 35 and 42 to 52; these read SASG…GKGN and SGGGVRPGFEG.

The protein belongs to the universal ribosomal protein uL15 family. Part of the 50S ribosomal subunit.

Binds to the 23S rRNA. The sequence is that of Large ribosomal subunit protein uL15 from Lawsonia intracellularis (strain PHE/MN1-00).